A 404-amino-acid polypeptide reads, in one-letter code: MKLPIYLDYSATTPVDPRVAQKMAECLLVDGNFGNPASRSHVFGWKAEEAVENGRRQVAELINADPREIVWTSGATESDNLALKGVAHFYQTKGKHIITSKIEHKAVLDTARQLEREGFEVTYLEPGEDGIVTPAMVEAALRDDTILVSLMHVNNEVGSINDIAAIGELTRSRGVLFHVDAAQSAGKVEIDVQKLKVDLMSFSAHKVYGPKGIGALYVSRKPRVRLEAIIHGGGHERGMRSGTLPTHQIVGMGEAFAIAKQEMAAENVRIKALSDRFFKQVSDLEELYVNGSQTARVPHNLNLSFNYVEGESLLMSLKDIAVSSGSACTSASLEPSYVLRALGRNDELAHSSIRFSFGRFTTEEEVDYAAQEVCKAVNKLRELSPLWDMYKDGVDISKIEWAAH.

Pyridoxal 5'-phosphate-binding positions include 75–76, N155, Q183, and 203–205; these read AT and SAH. Position 206 is an N6-(pyridoxal phosphate)lysine (K206). T243 provides a ligand contact to pyridoxal 5'-phosphate. C328 functions as the Cysteine persulfide intermediate in the catalytic mechanism. C328 serves as a coordination point for [2Fe-2S] cluster.

This sequence belongs to the class-V pyridoxal-phosphate-dependent aminotransferase family. NifS/IscS subfamily. Homodimer. Forms a heterotetramer with IscU, interacts with other sulfur acceptors. Pyridoxal 5'-phosphate is required as a cofactor.

It localises to the cytoplasm. The enzyme catalyses (sulfur carrier)-H + L-cysteine = (sulfur carrier)-SH + L-alanine. It participates in cofactor biosynthesis; iron-sulfur cluster biosynthesis. Master enzyme that delivers sulfur to a number of partners involved in Fe-S cluster assembly, tRNA modification or cofactor biosynthesis. Catalyzes the removal of elemental sulfur atoms from cysteine to produce alanine. Functions as a sulfur delivery protein for Fe-S cluster synthesis onto IscU, an Fe-S scaffold assembly protein, as well as other S acceptor proteins. The sequence is that of Cysteine desulfurase IscS from Pseudomonas entomophila (strain L48).